A 534-amino-acid polypeptide reads, in one-letter code: Glucan endo-1,3-beta-glucosidase 12 (534 aa).

The first 24 residues, 1–24, serve as a signal peptide directing secretion; sequence MGQRLNLVFWIFVSILAFLNFGMA. Glu-120 (proton donor) is an active-site residue. An N-linked (GlcNAc...) asparagine glycan is attached at Asn-127. The active-site Nucleophile is Glu-264. Residues Asn-336, Asn-357, and Asn-375 are each glycosylated (N-linked (GlcNAc...) asparagine). Residues 348–379 are disordered; sequence ENTTPVSPTNSTTGTSPSPSSSPIINGNSTVT. Positions 349-377 are enriched in low complexity; that stretch reads NTTPVSPTNSTTGTSPSPSSSPIINGNST. Cysteines 392 and 455 form a disulfide. N-linked (GlcNAc...) asparagine glycosylation is found at Asn-485, Asn-491, and Asn-495. Ser-507 carries GPI-anchor amidated serine lipidation. Positions 508 to 534 are cleaved as a propeptide — removed in mature form; sequence STNEAFRQMVVAVSVLLPCFVVCSSIW.

This sequence belongs to the glycosyl hydrolase 17 family. Post-translationally, contains two additional disulfide bonds.

The protein localises to the secreted. Its subcellular location is the cell wall. It is found in the cell membrane. The enzyme catalyses Hydrolysis of (1-&gt;3)-beta-D-glucosidic linkages in (1-&gt;3)-beta-D-glucans.. In Arabidopsis thaliana (Mouse-ear cress), this protein is Glucan endo-1,3-beta-glucosidase 12.